The primary structure comprises 478 residues: Ribulose bisphosphate carboxylase large chain (478 aa).

The propeptide occupies 1-2 (MS). At Pro3 the chain carries N-acetylproline. Lys14 carries the N6,N6,N6-trimethyllysine modification. Substrate-binding residues include Asn123 and Thr173. Lys175 (proton acceptor) is an active-site residue. Residue Lys177 participates in substrate binding. 3 residues coordinate Mg(2+): Lys201, Asp203, and Glu204. The residue at position 201 (Lys201) is an N6-carboxylysine. His294 serves as the catalytic Proton acceptor. Residues Arg295, His327, and Ser379 each contribute to the substrate site.

Belongs to the RuBisCO large chain family. Type I subfamily. In terms of assembly, heterohexadecamer of 8 large chains and 8 small chains; disulfide-linked. The disulfide link is formed within the large subunit homodimers. It depends on Mg(2+) as a cofactor. In terms of processing, the disulfide bond which can form in the large chain dimeric partners within the hexadecamer appears to be associated with oxidative stress and protein turnover.

It localises to the plastid. It is found in the chloroplast. The enzyme catalyses 2 (2R)-3-phosphoglycerate + 2 H(+) = D-ribulose 1,5-bisphosphate + CO2 + H2O. It catalyses the reaction D-ribulose 1,5-bisphosphate + O2 = 2-phosphoglycolate + (2R)-3-phosphoglycerate + 2 H(+). RuBisCO catalyzes two reactions: the carboxylation of D-ribulose 1,5-bisphosphate, the primary event in carbon dioxide fixation, as well as the oxidative fragmentation of the pentose substrate in the photorespiration process. Both reactions occur simultaneously and in competition at the same active site. The protein is Ribulose bisphosphate carboxylase large chain of Neurachne munroi.